A 301-amino-acid polypeptide reads, in one-letter code: D-alanine--D-alanine ligase A (301 aa).

In terms of domain architecture, ATP-grasp spans K96–E290. Residue L123–T178 coordinates ATP. D245, E257, and N259 together coordinate Mg(2+).

Belongs to the D-alanine--D-alanine ligase family. It depends on Mg(2+) as a cofactor. Requires Mn(2+) as cofactor.

It is found in the cytoplasm. It catalyses the reaction 2 D-alanine + ATP = D-alanyl-D-alanine + ADP + phosphate + H(+). Its pathway is cell wall biogenesis; peptidoglycan biosynthesis. Functionally, cell wall formation. The polypeptide is D-alanine--D-alanine ligase A (Bacillus cereus (strain ATCC 14579 / DSM 31 / CCUG 7414 / JCM 2152 / NBRC 15305 / NCIMB 9373 / NCTC 2599 / NRRL B-3711)).